A 269-amino-acid polypeptide reads, in one-letter code: Tryptophan synthase alpha chain (269 aa).

Residues E49 and D60 each act as proton acceptor in the active site.

This sequence belongs to the TrpA family. In terms of assembly, tetramer of two alpha and two beta chains.

It carries out the reaction (1S,2R)-1-C-(indol-3-yl)glycerol 3-phosphate + L-serine = D-glyceraldehyde 3-phosphate + L-tryptophan + H2O. It participates in amino-acid biosynthesis; L-tryptophan biosynthesis; L-tryptophan from chorismate: step 5/5. The alpha subunit is responsible for the aldol cleavage of indoleglycerol phosphate to indole and glyceraldehyde 3-phosphate. This chain is Tryptophan synthase alpha chain, found in Actinobacillus pleuropneumoniae serotype 5b (strain L20).